A 328-amino-acid polypeptide reads, in one-letter code: Leucine carboxyl methyltransferase 1 (328 aa).

S-adenosyl-L-methionine is bound by residues arginine 81, glycine 105, aspartate 128, 175 to 177 (DLN), and glutamate 201.

It belongs to the methyltransferase superfamily. LCMT family.

The enzyme catalyses [phosphatase 2A protein]-C-terminal L-leucine + S-adenosyl-L-methionine = [phosphatase 2A protein]-C-terminal L-leucine methyl ester + S-adenosyl-L-homocysteine. Inhibited by S-adenosyl-L-homocysteine. Functionally, methylates the carboxyl group of the C-terminal leucine residue of protein phosphatase 2A catalytic subunits to form alpha-leucine ester residues. Acts on the two major protein phosphatase 2A catalytic subunits, PPH21 and PPH22. This chain is Leucine carboxyl methyltransferase 1 (PPM1), found in Saccharomyces cerevisiae (strain ATCC 204508 / S288c) (Baker's yeast).